The sequence spans 417 residues: MAALLVPGGGAAPGLVWRRRRAAVQCAAASPSSPDPSWRTNVVSDRVSVEPSPRTIHECEADVVSGNPPAAPAAPAKAKAPPGTPVVKPLRLTSRPRRNRKSAALRDAFQETTLTPANFILPLFIHEGEEDSPIGAMPGCSRLGWRHGLIDEVYKARDVGVNSVVLFPKIPDALKSSTGDEAYNPDGLVPRAIRTLKDKFPDLVIYTDVALDPYSSDGHDGIVREDGVIMNDETVHQLCKQAVAQAEAGADVVSPSDMMDGRVGAIRTALDEAGYYHVSIMAYTAKYASAFYEPFREELDSNPRFGDKKTYQMNPENYREALLEVHADESEGADILMVKPAMPYLHVIRLLRDTSALPISAYQVSGEYSMIKAAASQGMLDEKKAILESLLCIKRAGADVILTYAALQAARWLCGEK.

The transit peptide at 1 to 40 (MAALLVPGGGAAPGLVWRRRRAAVQCAAASPSSPDPSWRT) directs the protein to the chloroplast. The segment at 63–92 (VVSGNPPAAPAAPAKAKAPPGTPVVKPLRL) is disordered. The active-site Schiff-base intermediate with substrate is the Lys-286. The 5-aminolevulinate site is built by Arg-296 and Lys-308. Glu-324 serves as a coordination point for Mg(2+). Lys-339 functions as the Schiff-base intermediate with substrate in the catalytic mechanism. The 5-aminolevulinate site is built by Ser-365 and Tyr-404.

This sequence belongs to the ALAD family. Homooctamer. Mg(2+) is required as a cofactor.

It is found in the plastid. The protein localises to the chloroplast. The enzyme catalyses 2 5-aminolevulinate = porphobilinogen + 2 H2O + H(+). Its pathway is porphyrin-containing compound metabolism; protoporphyrin-IX biosynthesis; coproporphyrinogen-III from 5-aminolevulinate: step 1/4. Catalyzes an early step in the biosynthesis of tetrapyrroles. Binds two molecules of 5-aminolevulinate per subunit, each at a distinct site, and catalyzes their condensation to form porphobilinogen. This Selaginella martensii (Martens's spike moss) protein is Delta-aminolevulinic acid dehydratase, chloroplastic (HEMB).